Reading from the N-terminus, the 440-residue chain is Ribosomal protein uS12 methylthiotransferase RimO (440 aa).

The MTTase N-terminal domain occupies 6 to 116; the sequence is PKVGFVSLGC…VVTAVHEVVP (111 aa). [4Fe-4S] cluster-binding residues include Cys15, Cys51, Cys80, Cys149, Cys153, and Cys156. Positions 135–373 constitute a Radical SAM core domain; it reads LTPRHYAYLK…MAHQQAISAA (239 aa). The TRAM domain maps to 376–440; it reads QLKVGKEIEV…DEYDLWAELV (65 aa).

It belongs to the methylthiotransferase family. RimO subfamily. Requires [4Fe-4S] cluster as cofactor.

The protein localises to the cytoplasm. The catalysed reaction is L-aspartate(89)-[ribosomal protein uS12]-hydrogen + (sulfur carrier)-SH + AH2 + 2 S-adenosyl-L-methionine = 3-methylsulfanyl-L-aspartate(89)-[ribosomal protein uS12]-hydrogen + (sulfur carrier)-H + 5'-deoxyadenosine + L-methionine + A + S-adenosyl-L-homocysteine + 2 H(+). Functionally, catalyzes the methylthiolation of an aspartic acid residue of ribosomal protein uS12. The sequence is that of Ribosomal protein uS12 methylthiotransferase RimO from Pseudomonas aeruginosa (strain UCBPP-PA14).